Here is a 900-residue protein sequence, read N- to C-terminus: Phospholipase DDHD1 (900 aa).

Disordered regions lie at residues 1 to 28, 100 to 152, and 202 to 233; these read MNYPGRGSPRSPEHNGRGGGGGAWELGS, LRYY…GGPA, and GARPQGGDRDGDHVCSPTGPASSSGEDDDEDR. Phosphoserine occurs at positions 8 and 11. Residues 130–140 are compositionally biased toward gly residues; the sequence is SGGGGATGGSP. The active site involves serine 537. The DDHD domain occupies 611-886; sequence LKFKVENFFC…ALFLLTFMYK (276 aa). Disordered stretches follow at residues 706–725 and 768–801; these read AKEPTSVSENEGISTIPSPV and SSTTQSSETSKDSMEDEKKPVASPSATTVGTQTL. The span at 710-725 shows a compositional bias: polar residues; sequence TSVSENEGISTIPSPV. Serine 723 is subject to Phosphoserine. The segment covering 776-787 has biased composition (basic and acidic residues); that stretch reads TSKDSMEDEKKP. Residues 791-801 show a composition bias toward polar residues; the sequence is PSATTVGTQTL.

This sequence belongs to the PA-PLA1 family. Forms homooligomers and, to a much smaller extent, heterooligomers with DDHD2. As to expression, highly expressed in testis. Also expressed in brain, spleen and lung. Only expressed in cerebellum in fetal brain.

The protein localises to the cytoplasm. The catalysed reaction is a 1,2-diacyl-sn-glycero-3-phosphate + H2O = a 2-acyl-sn-glycerol 3-phosphate + a fatty acid + H(+). It carries out the reaction a 1,2-diacyl-sn-glycero-3-phospho-(1D-myo-inositol) + H2O = a 2-acyl-sn-glycero-3-phospho-D-myo-inositol + a fatty acid + H(+). The enzyme catalyses 1-octadecanoyl-2-(5Z,8Z,11Z,14Z-eicosatetraenoyl)-sn-glycero-3-phospho-(1D-myo-inositol) + H2O = 2-(5Z,8Z,11Z,14Z-eicosatetraenoyl)-sn-glycero-3-phospho-(1D-myo-inositol) + octadecanoate + H(+). It catalyses the reaction a 1-acyl-2-(5Z,8Z,11Z,14Z-eicosatetraenoyl)-sn-glycero-3-phospho-(1D-myo-inositol) + H2O = 2-(5Z,8Z,11Z,14Z-eicosatetraenoyl)-sn-glycero-3-phospho-(1D-myo-inositol) + a fatty acid + H(+). The catalysed reaction is 1,2-dihexadecanoyl-sn-glycero-3-phospho-(1D-myo-inositol) + H2O = 2-hexadecanoyl-sn-glycero-3-phospho-(1D-myo-inositol) + hexadecanoate + H(+). It carries out the reaction a 1-acyl-2-(5Z,8Z,11Z,14Z)-eicosatetraenoyl-sn-glycero-3-phosphate + H2O = 2-(5Z,8Z,11Z,14Z-eicosatetraenoyl)-sn-glycero-3-phosphate + a fatty acid + H(+). The enzyme catalyses 1,2-di-(9Z-octadecenoyl)-sn-glycero-3-phosphate + H2O = 2-(9Z-octadecenoyl)-sn-glycero-3-phosphate + (9Z)-octadecenoate + H(+). It catalyses the reaction 1-hexadecanoyl-2-(9Z-octadecenoyl)-sn-glycero-3-phosphate + H2O = 2-(9Z-octadecenoyl)-sn-glycero-3-phosphate + hexadecanoate + H(+). The catalysed reaction is 1-hexadecanoyl-2-(9Z-octadecenoyl)-sn-glycero-3-phospho-L-serine + H2O = 2-(9Z-octadecenoyl)-sn-glycero-3-phospho-L-serine + hexadecanoate + H(+). It carries out the reaction 1,2-di-(5Z,8Z,11Z,14Z)-eicosatetraenoyl-sn-glycero-3-phosphate + H2O = 2-(5Z,8Z,11Z,14Z-eicosatetraenoyl)-sn-glycero-3-phosphate + (5Z,8Z,11Z,14Z)-eicosatetraenoate + H(+). The enzyme catalyses 1-octadecanoyl-2-(5Z,8Z,11Z,14Z-eicosatetraenoyl)-sn-glycero-3-phosphate + H2O = 2-(5Z,8Z,11Z,14Z-eicosatetraenoyl)-sn-glycero-3-phosphate + octadecanoate + H(+). It catalyses the reaction a 1,2-diacyl-sn-glycero-3-phosphocholine + H2O = a 2-acyl-sn-glycero-3-phosphocholine + a fatty acid + H(+). The catalysed reaction is a 1,2-diacyl-sn-glycero-3-phosphoethanolamine + H2O = a 2-acyl-sn-glycero-3-phosphoethanolamine + a fatty acid + H(+). It carries out the reaction a 1,2-diacyl-sn-glycero-3-phospho-L-serine + H2O = a 2-acyl-sn-glycero-3-phospho-L-serine + a fatty acid + H(+). The enzyme catalyses a 1,2-diacyl-sn-glycero-3-phospho-(1'-sn-glycerol) + H2O = 2-acyl-sn-glycero-3-phospho-(1'-sn-glycerol) + a fatty acid + H(+). It catalyses the reaction 1-hexadecanoyl-2-(9Z-octadecenoyl)-sn-glycero-3-phospho-(1'-sn-glycerol) + H2O = 2-(9Z-octadecenoyl)-sn-glycero-3-phospho-(1'-sn-glycerol) + hexadecanoate + H(+). The catalysed reaction is 1-acyl-2-(5Z,8Z,11Z,14Z-eicosatetraenoyl)-sn-glycero-3-phosphocholine + H2O = 2-(5Z,8Z,11Z,14Z)-eicosatetraenoyl-sn-glycero-3-phosphocholine + a fatty acid + H(+). It carries out the reaction 1-acyl-2-(5Z,8Z,11Z,14Z)-eicosatetraenoyl-sn-glycero-3-phosphoethanolamine + H2O = 2-(5Z,8Z,11Z,14Z)-eicosatetraenoyl-sn-glycero-3-phosphoethanolamine + a fatty acid + H(+). The enzyme catalyses 1-(9Z-octadecenoyl)-2-(7Z,10Z,13Z,16Z,19Z-docosapentaenoyl)-sn-glycero-3-phospho-1D-myo-inositol + H2O = 2-(7Z,10Z,13Z,16Z,19Z-docosapentaenoyl)-sn-glycero-3-phospho-1D-myo-inositol + (9Z)-octadecenoate + H(+). It catalyses the reaction 1-(9Z-octadecenoyl)-2-(5Z,8Z,11Z,14Z-eicosatetraenoyl)-sn-glycero-3-phospho-1D-myo-inositol + H2O = 2-(5Z,8Z,11Z,14Z-eicosatetraenoyl)-sn-glycero-3-phospho-(1D-myo-inositol) + (9Z)-octadecenoate + H(+). The catalysed reaction is 1,2-di-(9Z-octadecenoyl)-sn-glycero-3-phospho-1D-myo-inositol + H2O = 2-(9Z-octadecenoyl)-sn-glycero-3-phospho-1D-myo-inositol + (9Z)-octadecenoate + H(+). It carries out the reaction 1-(9Z-octadecenoyl)-2-(8Z,11Z,14Z-eicosatrienoyl)-sn-glycero-3-phospho-1D-myo-inositol + H2O = 2-(8Z,11Z,14Z-eicosatrienoyl)-sn-glycero-3-phospho-1D-myo-inositol + (9Z)-octadecenoate + H(+). The enzyme catalyses 1,2-di-(9Z-octadecenoyl)-sn-glycero-3-phosphocholine + H2O = (9Z-octadecenoyl)-sn-glycero-3-phosphocholine + (9Z)-octadecenoate + H(+). It participates in phospholipid metabolism; phosphatidylinositol metabolism. Its activity is regulated as follows. Phosphatidate (1,2-diacyl-sn-glycero-3-phosphate, PA) can positively regulate phospholipase A1 activity. Phospholipase A1 (PLA1) that hydrolyzes ester bonds at the sn-1 position of glycerophospholipids producing a free fatty acid and a lysophospholipid. Prefers phosphatidate (1,2-diacyl-sn-glycero-3-phosphate, PA) as substrate in vitro, but can efficiently hydrolyze phosphatidylinositol (1,2-diacyl-sn-glycero-3-phospho-(1D-myo-inositol), PI), as well as a range of other glycerophospholipid substrates such as phosphatidylcholine (1,2-diacyl-sn-glycero-3-phosphocholine, PC), phosphatidylethanolamine (1,2-diacyl-sn-glycero-3-phosphoethanolamine, PE), phosphatidylserine (1,2-diacyl-sn-glycero-3-phospho-L-serine, PS) and phosphatidylglycerol (1,2-diacyl-sn-glycero-3-phospho-(1'-sn-glycerol), PG). Involved in the regulation of the endogenous content of polyunsaturated PI and PS lipids in the nervous system. Changes in these lipids extend to downstream metabolic products like PI phosphates PIP and PIP2, which play fundamental roles in cell biology. Regulates mitochondrial morphology. These dynamic changes may be due to PA hydrolysis at the mitochondrial surface. May play a regulatory role in spermatogenesis or sperm function. The chain is Phospholipase DDHD1 from Homo sapiens (Human).